The sequence spans 372 residues: Type II methyltransferase M1.HphI (372 aa).

Residues 45–372 (LTYIDLFSGA…EAVLKMNTNE (328 aa)) enclose the SAM-dependent MTase C5-type domain. Cys122 is an active-site residue.

It belongs to the class I-like SAM-binding methyltransferase superfamily. C5-methyltransferase family.

The enzyme catalyses a 2'-deoxycytidine in DNA + S-adenosyl-L-methionine = a 5-methyl-2'-deoxycytidine in DNA + S-adenosyl-L-homocysteine + H(+). A methylase that recognizes the double-stranded sequence 5'-GGTGA-3' and protects the DNA from cleavage by the HphI endonuclease. Probably methylates C-2 on the bottom strand. The chain is Type II methyltransferase M1.HphI (hphIAM) from Haemophilus parahaemolyticus.